Here is a 396-residue protein sequence, read N- to C-terminus: Interactor of constitutive active ROPs 5 (396 aa).

2 disordered regions span residues 1–49 (MQTP…TQIP) and 99–122 (ALKREAQEEAEDAKHQLMDINASE). Coiled-coil stretches lie at residues 67 to 124 (KKRT…SEDS) and 158 to 366 (LSSA…TAAS). Over residues 99–115 (ALKREAQEEAEDAKHQL) the composition is skewed to basic and acidic residues.

Belongs to the ICR family. As to quaternary structure, component of the active ARAC10-IRC5-KIN13A complex. Homooligomer. Interacts (via C-terminus) with ARAC4, ARAC10, ARAC11 and (via N-terminus) with KIN13A (via C-terminus), but no interactions with SEC3A. As to expression, expressed in xylem cells in the roots and in stamens, petals and pollen.

It is found in the cell membrane. Its subcellular location is the cytoplasm. The protein localises to the cytoskeleton. Functionally, ROP effector binding specifically activated ROPs and linking them to the microtubule cytoskeleton. Involved in ROP-regulated polar growth. Involved in local disassembly of cortical microtubules when associated with ARAC10 and KIN13A and conversely also mediates the elimination of ARAC10 from the plasma membrane by the cortical microtubules. Accumulates at the plus end of shrinking microtubules. Targets KIN13A to microtubules. The sequence is that of Interactor of constitutive active ROPs 5 (ICR5) from Arabidopsis thaliana (Mouse-ear cress).